Here is a 170-residue protein sequence, read N- to C-terminus: RNA pyrophosphohydrolase (170 aa).

The Nudix hydrolase domain occupies 6-149 (GFRPNVGIVI…KRDVYRRALK (144 aa)). The Nudix box signature appears at 38-59 (GGIDDGETPEQAMYRELYEEVG).

The protein belongs to the Nudix hydrolase family. RppH subfamily. It depends on a divalent metal cation as a cofactor.

In terms of biological role, accelerates the degradation of transcripts by removing pyrophosphate from the 5'-end of triphosphorylated RNA, leading to a more labile monophosphorylated state that can stimulate subsequent ribonuclease cleavage. The sequence is that of RNA pyrophosphohydrolase from Aliivibrio fischeri (strain ATCC 700601 / ES114) (Vibrio fischeri).